A 261-amino-acid polypeptide reads, in one-letter code: Carnitinyl-CoA dehydratase (261 aa).

The Nucleophile role is filled by glutamate 111. The Proton acceptor role is filled by glutamate 131.

This sequence belongs to the enoyl-CoA hydratase/isomerase family.

It carries out the reaction (R)-carnitinyl-CoA = crotonobetainyl-CoA + H2O. It participates in amine and polyamine metabolism; carnitine metabolism. Functionally, catalyzes the reversible dehydration of L-carnitinyl-CoA to crotonobetainyl-CoA. This is Carnitinyl-CoA dehydratase from Proteus mirabilis (strain HI4320).